The chain runs to 177 residues: Peptide deformylase 2 (177 aa).

Residues C99 and H141 each coordinate Fe cation. Residue E142 is part of the active site. H145 lines the Fe cation pocket.

The protein belongs to the polypeptide deformylase family. It depends on Fe(2+) as a cofactor.

The catalysed reaction is N-terminal N-formyl-L-methionyl-[peptide] + H2O = N-terminal L-methionyl-[peptide] + formate. Its function is as follows. Removes the formyl group from the N-terminal Met of newly synthesized proteins. Requires at least a dipeptide for an efficient rate of reaction. N-terminal L-methionine is a prerequisite for activity but the enzyme has broad specificity at other positions. The protein is Peptide deformylase 2 of Ralstonia nicotianae (strain ATCC BAA-1114 / GMI1000) (Ralstonia solanacearum).